Consider the following 203-residue polypeptide: Peptide deformylase (203 aa).

Positions 121 and 163 each coordinate Fe cation. E164 is a catalytic residue. A Fe cation-binding site is contributed by H167.

Belongs to the polypeptide deformylase family. The cofactor is Fe(2+).

The enzyme catalyses N-terminal N-formyl-L-methionyl-[peptide] + H2O = N-terminal L-methionyl-[peptide] + formate. In terms of biological role, removes the formyl group from the N-terminal Met of newly synthesized proteins. Requires at least a dipeptide for an efficient rate of reaction. N-terminal L-methionine is a prerequisite for activity but the enzyme has broad specificity at other positions. This chain is Peptide deformylase, found in Prochlorococcus marinus (strain MIT 9515).